The chain runs to 772 residues: Acetamidase regulatory protein (772 aa).

Residues 1-16 are compositionally biased toward polar residues; the sequence is MSSTAQKNSLSPTGNG. Residues 1-23 form a disordered region; it reads MSSTAQKNSLSPTGNGVTKRKSG. The zn(2)-C6 fungal-type DNA-binding region spans 26 to 59; that stretch reads ACVHCHRRKVRCDARIVGLPCSNCRSSGKTDCRI. 3 disordered regions span residues 78 to 99, 114 to 148, and 627 to 690; these read RCRPPSTSEHVPEASPPSTISE, AAAPPASVAPNVQSKAQHLHSNSYSQTSPQAQECH, and ATSE…QTAV. The span at 114–123 shows a compositional bias: low complexity; the sequence is AAAPPASVAP. Polar residues-rich tracts occupy residues 124–144 and 634–658; these read NVQSKAQHLHSNSYSQTSPQA and PFSSTQDQPQAQALDQNKNQHQHSS. A compositionally biased stretch (low complexity) spans 671-686; it reads LLPSYDSPTPDSTSLP.

It is found in the nucleus. In terms of biological role, positively regulates the expression of genes involved in the catabolism of certain amides, omega amino acids, and lactams. The chain is Acetamidase regulatory protein (amdR) from Aspergillus fumigatus (strain ATCC MYA-4609 / CBS 101355 / FGSC A1100 / Af293) (Neosartorya fumigata).